A 456-amino-acid polypeptide reads, in one-letter code: MERTCLAIILAAGESTRMKSAMSKVLHPVAGRPMIAHVVDALASASITDVALVVGRDAEAVSTAASTGSVTVSSFLQKERLGTAHAVLAARAAIEKGYDDVLVVFGDTPLITAAPLTAARERLAEGNDVVVIGFETADPTGYGRLIVKDGELLAIREHKDASEEERRITYCNGGLMAISGSKALDLLGRIGNANVKGEYYLTDLVEIVRSLGGRAIAVEAPEEELTGCNTRAELAYIERLWQQRRRQELMLAGVSMVAPETVFLAWDTELAEDVLVEPNVVFGPGVRVESGAVIHAFSHVEGAHVRAGATVGPFARLRPGADLGPKSKVGNFCEVKKAEIGAGAKVNHLTYIGDAFVGAGSNIGAGTITCNYDGVNKHVTRIGENTFIGSNASLVAPVSIGSGALVASGSVITEDVPADAVAFGRARQEIKPGRAPILRQRYEAEKAARKKVKAAE.

The segment at 1-231 (MERTCLAIIL…EEELTGCNTR (231 aa)) is pyrophosphorylase. UDP-N-acetyl-alpha-D-glucosamine contacts are provided by residues 10–13 (LAAG), Lys24, Gln77, and 82–83 (GT). Asp107 contacts Mg(2+). Gly143, Glu157, Asn172, and Asn229 together coordinate UDP-N-acetyl-alpha-D-glucosamine. Position 229 (Asn229) interacts with Mg(2+). A linker region spans residues 232-252 (AELAYIERLWQQRRRQELMLA). An N-acetyltransferase region spans residues 253-456 (GVSMVAPETV…AARKKVKAAE (204 aa)). UDP-N-acetyl-alpha-D-glucosamine-binding residues include Arg318 and Lys336. His348 (proton acceptor) is an active-site residue. Residues Tyr351 and Asn362 each contribute to the UDP-N-acetyl-alpha-D-glucosamine site. Acetyl-CoA contacts are provided by residues Ala365, 371–372 (NY), Ser390, Ser408, and Arg425.

It in the N-terminal section; belongs to the N-acetylglucosamine-1-phosphate uridyltransferase family. In the C-terminal section; belongs to the transferase hexapeptide repeat family. In terms of assembly, homotrimer. Requires Mg(2+) as cofactor.

It is found in the cytoplasm. It carries out the reaction alpha-D-glucosamine 1-phosphate + acetyl-CoA = N-acetyl-alpha-D-glucosamine 1-phosphate + CoA + H(+). The catalysed reaction is N-acetyl-alpha-D-glucosamine 1-phosphate + UTP + H(+) = UDP-N-acetyl-alpha-D-glucosamine + diphosphate. The protein operates within nucleotide-sugar biosynthesis; UDP-N-acetyl-alpha-D-glucosamine biosynthesis; N-acetyl-alpha-D-glucosamine 1-phosphate from alpha-D-glucosamine 6-phosphate (route II): step 2/2. It participates in nucleotide-sugar biosynthesis; UDP-N-acetyl-alpha-D-glucosamine biosynthesis; UDP-N-acetyl-alpha-D-glucosamine from N-acetyl-alpha-D-glucosamine 1-phosphate: step 1/1. Its pathway is bacterial outer membrane biogenesis; LPS lipid A biosynthesis. Functionally, catalyzes the last two sequential reactions in the de novo biosynthetic pathway for UDP-N-acetylglucosamine (UDP-GlcNAc). The C-terminal domain catalyzes the transfer of acetyl group from acetyl coenzyme A to glucosamine-1-phosphate (GlcN-1-P) to produce N-acetylglucosamine-1-phosphate (GlcNAc-1-P), which is converted into UDP-GlcNAc by the transfer of uridine 5-monophosphate (from uridine 5-triphosphate), a reaction catalyzed by the N-terminal domain. This chain is Bifunctional protein GlmU, found in Sinorhizobium fredii (strain NBRC 101917 / NGR234).